The chain runs to 193 residues: dCTP deaminase (193 aa).

DCTP is bound by residues 110–115 (RSSLAR), D128, 136–138 (VLE), Y171, K178, and Q182. The active-site Proton donor/acceptor is the E138. A disordered region spans residues 169-193 (RPYNSRQDAKYRDQQGAVASRIDKD).

The protein belongs to the dCTP deaminase family. In terms of assembly, homotrimer.

The catalysed reaction is dCTP + H2O + H(+) = dUTP + NH4(+). Its pathway is pyrimidine metabolism; dUMP biosynthesis; dUMP from dCTP (dUTP route): step 1/2. In terms of biological role, catalyzes the deamination of dCTP to dUTP. This Serratia proteamaculans (strain 568) protein is dCTP deaminase.